A 96-amino-acid chain; its full sequence is Large ribosomal subunit protein uL23 (96 aa).

It belongs to the universal ribosomal protein uL23 family. As to quaternary structure, part of the 50S ribosomal subunit. Contacts protein L29, and trigger factor when it is bound to the ribosome.

Functionally, one of the early assembly proteins it binds 23S rRNA. One of the proteins that surrounds the polypeptide exit tunnel on the outside of the ribosome. Forms the main docking site for trigger factor binding to the ribosome. The chain is Large ribosomal subunit protein uL23 from Thermus thermophilus (strain ATCC BAA-163 / DSM 7039 / HB27).